Here is a 469-residue protein sequence, read N- to C-terminus: 3-isopropylmalate dehydratase large subunit (469 aa).

The [4Fe-4S] cluster site is built by C350, C410, and C413.

The protein belongs to the aconitase/IPM isomerase family. LeuC type 1 subfamily. As to quaternary structure, heterodimer of LeuC and LeuD. [4Fe-4S] cluster is required as a cofactor.

It catalyses the reaction (2R,3S)-3-isopropylmalate = (2S)-2-isopropylmalate. The protein operates within amino-acid biosynthesis; L-leucine biosynthesis; L-leucine from 3-methyl-2-oxobutanoate: step 2/4. In terms of biological role, catalyzes the isomerization between 2-isopropylmalate and 3-isopropylmalate, via the formation of 2-isopropylmaleate. The polypeptide is 3-isopropylmalate dehydratase large subunit (Rhodopseudomonas palustris (strain TIE-1)).